A 143-amino-acid polypeptide reads, in one-letter code: Nucleoside diphosphate kinase (143 aa).

Residues K11, F59, R87, T93, R104, and N114 each contribute to the ATP site. The active-site Pros-phosphohistidine intermediate is H117.

This sequence belongs to the NDK family. Homotetramer. Requires Mg(2+) as cofactor.

It localises to the cytoplasm. It catalyses the reaction a 2'-deoxyribonucleoside 5'-diphosphate + ATP = a 2'-deoxyribonucleoside 5'-triphosphate + ADP. The catalysed reaction is a ribonucleoside 5'-diphosphate + ATP = a ribonucleoside 5'-triphosphate + ADP. In terms of biological role, major role in the synthesis of nucleoside triphosphates other than ATP. The ATP gamma phosphate is transferred to the NDP beta phosphate via a ping-pong mechanism, using a phosphorylated active-site intermediate. This Shigella boydii serotype 4 (strain Sb227) protein is Nucleoside diphosphate kinase.